A 68-amino-acid polypeptide reads, in one-letter code: UPF0435 protein SAB1812c (68 aa).

The protein belongs to the UPF0435 family.

The chain is UPF0435 protein SAB1812c from Staphylococcus aureus (strain bovine RF122 / ET3-1).